The sequence spans 193 residues: Ion-translocating oxidoreductase complex subunit A (193 aa).

The next 6 membrane-spanning stretches (helical) occupy residues 5-25 (ALLF…FLGL), 39-59 (IGMG…SWLV), 62-82 (FILV…LVLA), 102-122 (LLGI…VVLL), 134-154 (TIYG…FAAI), and 171-191 (SIAL…TGLV).

This sequence belongs to the NqrDE/RnfAE family. In terms of assembly, the complex is composed of six subunits: RnfA, RnfB, RnfC, RnfD, RnfE and RnfG.

It is found in the cell inner membrane. Part of a membrane-bound complex that couples electron transfer with translocation of ions across the membrane. This is Ion-translocating oxidoreductase complex subunit A from Pectobacterium carotovorum subsp. carotovorum (strain PC1).